Consider the following 149-residue polypeptide: Large ribosomal subunit protein bL9 (149 aa).

It belongs to the bacterial ribosomal protein bL9 family.

Functionally, binds to the 23S rRNA. The chain is Large ribosomal subunit protein bL9 from Geobacillus thermodenitrificans (strain NG80-2).